Consider the following 501-residue polypeptide: Glucose-6-phosphate exchanger SLC37A2 (501 aa).

The helical transmembrane segment at 19-39 (SWFRGFILLLTFLIYACYHMS) threads the bilayer. Residues N53, N62, and N68 are each glycosylated (N-linked (GlcNAc...) asparagine). The next 5 membrane-spanning stretches (helical) occupy residues 88–108 (GAVD…SGIF), 118–140 (LSAG…FWNI), 142–164 (MLWY…WPSV), 179–199 (FIMG…SLIA), and 210–230 (SFIV…LFLI). The segment covering 240–252 (PPRHHDDPEKEQD) has biased composition (basic and acidic residues). The segment at 240–266 (PPRHHDDPEKEQDNPEDPVNSPYSSRE) is disordered. 6 helical membrane-spanning segments follow: residues 303-323 (CLLF…LYIF), 334-354 (GDLS…AGLI), 362-382 (ATTC…YNYI), 391-411 (IVML…ITTA), 434-454 (AIID…AGLI), and 462-482 (VFYM…RLVY).

The protein belongs to the major facilitator superfamily. Organophosphate:Pi antiporter (OPA) (TC 2.A.1.4) family. Highly expressed in bone marrow derived macrophages, and weakly in spleen.

It localises to the endoplasmic reticulum membrane. The enzyme catalyses D-glucose 6-phosphate(in) + phosphate(out) = D-glucose 6-phosphate(out) + phosphate(in). With respect to regulation, inhibited by vanadate but not by chlorogenic acid. Its function is as follows. Inorganic phosphate and glucose-6-phosphate antiporter. May transport cytoplasmic glucose-6-phosphate into the lumen of the endoplasmic reticulum and translocate inorganic phosphate into the opposite direction. Independent of a lumenal glucose-6-phosphatase. May not play a role in homeostatic regulation of blood glucose levels. This is Glucose-6-phosphate exchanger SLC37A2 from Mus musculus (Mouse).